We begin with the raw amino-acid sequence, 371 residues long: UDP-N-acetylglucosamine--N-acetylmuramyl-(pentapeptide) pyrophosphoryl-undecaprenol N-acetylglucosamine transferase (371 aa).

Residues 10-12 (TGG), Asn124, Arg165, Ser197, Ile251, and Gln296 contribute to the UDP-N-acetyl-alpha-D-glucosamine site.

It belongs to the glycosyltransferase 28 family. MurG subfamily.

It is found in the cell membrane. It catalyses the reaction di-trans,octa-cis-undecaprenyl diphospho-N-acetyl-alpha-D-muramoyl-L-alanyl-D-glutamyl-meso-2,6-diaminopimeloyl-D-alanyl-D-alanine + UDP-N-acetyl-alpha-D-glucosamine = di-trans,octa-cis-undecaprenyl diphospho-[N-acetyl-alpha-D-glucosaminyl-(1-&gt;4)]-N-acetyl-alpha-D-muramoyl-L-alanyl-D-glutamyl-meso-2,6-diaminopimeloyl-D-alanyl-D-alanine + UDP + H(+). It functions in the pathway cell wall biogenesis; peptidoglycan biosynthesis. In terms of biological role, cell wall formation. Catalyzes the transfer of a GlcNAc subunit on undecaprenyl-pyrophosphoryl-MurNAc-pentapeptide (lipid intermediate I) to form undecaprenyl-pyrophosphoryl-MurNAc-(pentapeptide)GlcNAc (lipid intermediate II). In Carboxydothermus hydrogenoformans (strain ATCC BAA-161 / DSM 6008 / Z-2901), this protein is UDP-N-acetylglucosamine--N-acetylmuramyl-(pentapeptide) pyrophosphoryl-undecaprenol N-acetylglucosamine transferase.